A 286-amino-acid polypeptide reads, in one-letter code: Transcriptional regulator of yeast form adherence 4 (286 aa).

Composition is skewed to low complexity over residues methionine 1–serine 29 and leucine 37–asparagine 65. Residues methionine 1–proline 71 form a disordered region. 2 C2H2-type zinc fingers span residues phenylalanine 78–histidine 101 and phenylalanine 107–histidine 130. A disordered region spans residues histidine 146–histidine 260. Composition is skewed to low complexity over residues glycine 156–asparagine 165 and serine 228–threonine 244. Over residues asparagine 245–histidine 260 the composition is skewed to polar residues.

The protein resides in the nucleus. In terms of biological role, transcription factor required for yeast cell adherence to silicone substrate. This chain is Transcriptional regulator of yeast form adherence 4 (TRY4), found in Candida albicans (strain SC5314 / ATCC MYA-2876) (Yeast).